The sequence spans 323 residues: Galectin-4 (323 aa).

Galectin domains are found at residues 19 to 150 and 194 to 323; these read YYQP…INFI and YFGR…YVQI. 256 to 262 is a binding site for a beta-D-galactoside; it reads WGSEEKK. The residue at position 258 (Ser-258) is a Phosphoserine.

In terms of assembly, monomer.

In terms of biological role, galectin that binds lactose and a related range of sugars. May be involved in the assembly of adherens junctions. This chain is Galectin-4 (LGALS4), found in Homo sapiens (Human).